The chain runs to 416 residues: Gamma-glutamyl phosphate reductase (416 aa).

This sequence belongs to the gamma-glutamyl phosphate reductase family.

It localises to the cytoplasm. It carries out the reaction L-glutamate 5-semialdehyde + phosphate + NADP(+) = L-glutamyl 5-phosphate + NADPH + H(+). The protein operates within amino-acid biosynthesis; L-proline biosynthesis; L-glutamate 5-semialdehyde from L-glutamate: step 2/2. Functionally, catalyzes the NADPH-dependent reduction of L-glutamate 5-phosphate into L-glutamate 5-semialdehyde and phosphate. The product spontaneously undergoes cyclization to form 1-pyrroline-5-carboxylate. In Vibrio vulnificus (strain YJ016), this protein is Gamma-glutamyl phosphate reductase.